We begin with the raw amino-acid sequence, 184 residues long: Putative manganese efflux pump MntP (184 aa).

Helical transmembrane passes span 3-23, 36-56, 65-85, 103-123, 126-146, and 163-183; these read LLSM…ISVS, ALIS…LGWV, VSAL…LKMI, LLVL…SFAL, ISIW…SLAG, and ALGG…NVSF.

The protein belongs to the MntP (TC 9.B.29) family.

It is found in the cell membrane. Probably functions as a manganese efflux pump. The sequence is that of Putative manganese efflux pump MntP from Methanothermobacter thermautotrophicus (strain ATCC 29096 / DSM 1053 / JCM 10044 / NBRC 100330 / Delta H) (Methanobacterium thermoautotrophicum).